The primary structure comprises 215 residues: Probable transaldolase (215 aa).

Catalysis depends on Lys83, which acts as the Schiff-base intermediate with substrate.

Belongs to the transaldolase family. Type 3B subfamily.

It is found in the cytoplasm. The enzyme catalyses D-sedoheptulose 7-phosphate + D-glyceraldehyde 3-phosphate = D-erythrose 4-phosphate + beta-D-fructose 6-phosphate. It participates in carbohydrate degradation; pentose phosphate pathway; D-glyceraldehyde 3-phosphate and beta-D-fructose 6-phosphate from D-ribose 5-phosphate and D-xylulose 5-phosphate (non-oxidative stage): step 2/3. Functionally, transaldolase is important for the balance of metabolites in the pentose-phosphate pathway. The sequence is that of Probable transaldolase from Clostridium kluyveri (strain NBRC 12016).